A 543-amino-acid chain; its full sequence is CTP synthase (543 aa).

The interval 1-265 is amidoligase domain; that stretch reads MARYIFITGG…DDEVLAAFGI (265 aa). Ser13 lines the CTP pocket. Residue Ser13 coordinates UTP. 14-19 provides a ligand contact to ATP; the sequence is SLGKGL. Tyr54 is a binding site for L-glutamine. Position 71 (Asp71) interacts with ATP. 2 residues coordinate Mg(2+): Asp71 and Glu139. CTP is bound by residues 146–148, 186–191, and Lys222; these read DIE and KTKPTQ. Residues 186-191 and Lys222 contribute to the UTP site; that span reads KTKPTQ. 238-240 contacts ATP; the sequence is RDV. In terms of domain architecture, Glutamine amidotransferase type-1 spans 291-542; that stretch reads TIAIVGKYTG…VQAAVVQSRL (252 aa). Gly353 lines the L-glutamine pocket. Residue Cys380 is the Nucleophile; for glutamine hydrolysis of the active site. L-glutamine contacts are provided by residues 381 to 384, Glu404, and Arg470; that span reads FGMQ. Catalysis depends on residues His515 and Glu517.

Belongs to the CTP synthase family. As to quaternary structure, homotetramer.

It catalyses the reaction UTP + L-glutamine + ATP + H2O = CTP + L-glutamate + ADP + phosphate + 2 H(+). The catalysed reaction is L-glutamine + H2O = L-glutamate + NH4(+). The enzyme catalyses UTP + NH4(+) + ATP = CTP + ADP + phosphate + 2 H(+). Its pathway is pyrimidine metabolism; CTP biosynthesis via de novo pathway; CTP from UDP: step 2/2. Its activity is regulated as follows. Allosterically activated by GTP, when glutamine is the substrate; GTP has no effect on the reaction when ammonia is the substrate. The allosteric effector GTP functions by stabilizing the protein conformation that binds the tetrahedral intermediate(s) formed during glutamine hydrolysis. Inhibited by the product CTP, via allosteric rather than competitive inhibition. Its function is as follows. Catalyzes the ATP-dependent amination of UTP to CTP with either L-glutamine or ammonia as the source of nitrogen. Regulates intracellular CTP levels through interactions with the four ribonucleotide triphosphates. The polypeptide is CTP synthase (Rhodopseudomonas palustris (strain BisB18)).